The primary structure comprises 670 residues: MGESNEDIDQMFSTLLGEMDLLTQSLGVDTLPPPDPNPPREEFNYTVGFKDLNESLNALEDQDLDALMADLVADISEAEQRTIQAQKESSQNQDRFALLRASDGQGTASGGYGASAAAIDVSHHEEALPPPPVEPMLDLLPPPPPPPPPELLSKEEEEAKAKADKIKLALEKLKEAKVKKLVVKVHMDDSSTKSLMVDERQLARDVLDNLFEKTHCDCNVDWCLYEIYPELQIERVFEDHENVVEVLSDWTRDTENKVLFLEKEERYAVFKNPQNFYLDNKGKKENKETNEKMNAKNKEYLLEESFCGTSIIVPELEGALYLKEDGKKSWKRRYFLLRASGIYYVPKGKTKTSRDLACFIQFENVNIYYGIQCKMKYKAPTDHCFVLKHPQIQKESQYIKYLCCDDARTLSQWVMGIRIAKYGKTLYDNYQRAVARAGLASRWTNLGTVGTPMPAQPSTVSSGLKTGTSQPNGQMPQAIPSAGPPLQEAQTQIETTKDEKQGLGNHSPGATRENHRPKSSLPPPPPPVRRSSDTCGSPALPSKVKGPGTCTFPHPPENFLPPPPPPPPEEDNSGLLPPPPPPPYLEEPPDFVPPPPPPAAVEDSALPPPPPPPPCLSQEITKSSPLPPKKPLVPPKRQENQGLPGAPGNSEQDFMSDLMKALQKKRGNIP.

At Ser-55 the chain carries Phosphoserine. The Ras-associating domain occupies 179–266 (KKLVVKVHMD…KVLFLEKEER (88 aa)). One can recognise a PH domain in the interval 313–422 (VPELEGALYL…WVMGIRIAKY (110 aa)). The interval 449–653 (VGTPMPAQPS…PGAPGNSEQD (205 aa)) is disordered. Residues 456–475 (QPSTVSSGLKTGTSQPNGQM) show a composition bias toward polar residues. Ser-532 is subject to Phosphoserine. A Phosphothreonine modification is found at Thr-534. Ser-537 bears the Phosphoserine mark. Pro residues-rich tracts occupy residues 553–567 (PHPP…PPPP), 576–599 (LPPP…PPPA), 606–615 (LPPPPPPPPC), and 625–634 (PLPPKKPLVP).

It belongs to the MRL family. As to quaternary structure, interacts, through the N-terminal Pro-rich region, with the WW domain of APBB1. Interacts with RAP1A, PFN1, VASP and ENAH. As to expression, ubiquitously expressed with high expression in the hematopoietic system.

It localises to the cell membrane. It is found in the cell projection. The protein localises to the lamellipodium. Its subcellular location is the cell junction. The protein resides in the focal adhesion. It localises to the cytoplasm. It is found in the cytoskeleton. In terms of biological role, appears to function in the signal transduction from Ras activation to actin cytoskeletal remodeling. Suppresses insulin-induced promoter activities through AP1 and SRE. Mediates Rap1-induced adhesion. In Mus musculus (Mouse), this protein is Amyloid beta A4 precursor protein-binding family B member 1-interacting protein (Apbb1ip).